A 348-amino-acid polypeptide reads, in one-letter code: NADH-ubiquinone oxidoreductase chain 2 (348 aa).

The next 10 membrane-spanning stretches (helical) occupy residues 1 to 21 (MSPYVTMILISSLGLGTTITF), 25 to 45 (SWLMAWMGLEINTLAITPLMV), 60 to 80 (FLTQATASGLLLFATLNNAWM), 93 to 115 (LSAPMITMALALKMGVAPMHFWL), 149 to 169 (LNTTTMTILGLTSTIIGGLGG), 177 to 197 (KVLAYSSIAHLGWMVIIIQYS), 200 to 220 (LALLNLLLYITMTSTAFLTLM), 239 to 259 (IATMTAMLALLALGGLPPLTG), 274 to 294 (NLPALATLMALSALLSLFFYL), and 326 to 346 (LAMLSIMTLMALPTTPTMVAI).

It belongs to the complex I subunit 2 family.

The protein resides in the mitochondrion inner membrane. The enzyme catalyses a ubiquinone + NADH + 5 H(+)(in) = a ubiquinol + NAD(+) + 4 H(+)(out). In terms of biological role, core subunit of the mitochondrial membrane respiratory chain NADH dehydrogenase (Complex I) that is believed to belong to the minimal assembly required for catalysis. Complex I functions in the transfer of electrons from NADH to the respiratory chain. The immediate electron acceptor for the enzyme is believed to be ubiquinone. The protein is NADH-ubiquinone oxidoreductase chain 2 (MT-ND2) of Latimeria chalumnae (Coelacanth).